The primary structure comprises 474 residues: 6-phospho-beta-galactosidase (474 aa).

Gln-18, His-115, Asn-159, Glu-160, and Asn-296 together coordinate D-galactose 6-phosphate. The active-site Proton donor is the Glu-160. The active-site Nucleophile is Glu-374. Residues Ser-427, Trp-428, Lys-434, and Tyr-436 each contribute to the D-galactose 6-phosphate site.

Belongs to the glycosyl hydrolase 1 family.

The catalysed reaction is a 6-phospho-beta-D-galactoside + H2O = D-galactose 6-phosphate + an alcohol. The protein operates within carbohydrate metabolism; lactose degradation; D-galactose 6-phosphate and beta-D-glucose from lactose 6-phosphate: step 1/1. In Clostridium acetobutylicum (strain ATCC 824 / DSM 792 / JCM 1419 / IAM 19013 / LMG 5710 / NBRC 13948 / NRRL B-527 / VKM B-1787 / 2291 / W), this protein is 6-phospho-beta-galactosidase.